Reading from the N-terminus, the 351-residue chain is Ribosomal RNA small subunit methyltransferase H (351 aa).

Residues 48–50 (GGY), aspartate 67, phenylalanine 94, aspartate 115, and glutamine 122 each bind S-adenosyl-L-methionine. Residues 298 to 351 (GPVLPSEAETEVNPRARSAKLRAGERTDGPAPPPLSAIETLASLPAPQGRGTRR) are disordered.

Belongs to the methyltransferase superfamily. RsmH family.

Its subcellular location is the cytoplasm. It catalyses the reaction cytidine(1402) in 16S rRNA + S-adenosyl-L-methionine = N(4)-methylcytidine(1402) in 16S rRNA + S-adenosyl-L-homocysteine + H(+). Its function is as follows. Specifically methylates the N4 position of cytidine in position 1402 (C1402) of 16S rRNA. This is Ribosomal RNA small subunit methyltransferase H from Methylorubrum populi (strain ATCC BAA-705 / NCIMB 13946 / BJ001) (Methylobacterium populi).